We begin with the raw amino-acid sequence, 191 residues long: ECF RNA polymerase sigma factor ShbA (191 aa).

Positions 27–98 are sigma-70 factor domain-2; that stretch reads LLAHVHPLAL…HKVADLQRAA (72 aa). A disordered region spans residues 100–122; that stretch reads RHPGSTAVPSDEMPERPDDSLGP. Basic and acidic residues predominate over residues 112–122; the sequence is MPERPDDSLGP. The sigma-70 factor domain-4 stretch occupies residues 138–187; it reads LLANLPENQRELLVLRVAVGLTAEETGQMLGMSPGAVRVAQHRALSRLRA. The H-T-H motif DNA-binding region spans 160-179; that stretch reads AEETGQMLGMSPGAVRVAQH.

It belongs to the sigma-70 factor family. ECF subfamily.

Functionally, sigma factors are initiation factors that promote the attachment of RNA polymerase to specific initiation sites and are then released. Extracytoplasmic function (ECF) sigma factors are held in an inactive form by an anti-sigma factor until released. This alternative sigma factor governs the transcription of the principal sigma factor HrdB (SigA) throughout growth. Acts by binding to the promoter region. This Streptomyces griseus subsp. griseus (strain JCM 4626 / CBS 651.72 / NBRC 13350 / KCC S-0626 / ISP 5235) protein is ECF RNA polymerase sigma factor ShbA.